An 831-amino-acid chain; its full sequence is Periplasmic nitrate reductase (831 aa).

The segment at residues 1–31 (MKLSRRDFMKANAAVAAAAAAGLTIPTVAKA) is a signal peptide (tat-type signal). A 4Fe-4S Mo/W bis-MGD-type domain is found at 40–96 (IKWDKAPCRFCGTGCGVLVGTQNGRIVASQGDPDSPVNRGLNCVKGYFLPKIMYGKD). [4Fe-4S] cluster contacts are provided by Cys-47, Cys-50, Cys-54, and Cys-82. Mo-bis(molybdopterin guanine dinucleotide) contacts are provided by residues Lys-84, Gln-151, Asn-176, Cys-180, 213–220 (WGSNMAEM), 244–248 (STFEH), 263–265 (QTD), Met-373, Gln-377, Asn-483, 509–510 (SD), Lys-532, Asp-559, and 719–728 (TGRVLEHWHT). A substrate-binding site is contributed by Phe-795. 2 residues coordinate Mo-bis(molybdopterin guanine dinucleotide): Asn-803 and Lys-820.

This sequence belongs to the prokaryotic molybdopterin-containing oxidoreductase family. NasA/NapA/NarB subfamily. Component of the periplasmic nitrate reductase NapAB complex composed of NapA and NapB. Requires [4Fe-4S] cluster as cofactor. Mo-bis(molybdopterin guanine dinucleotide) serves as cofactor. In terms of processing, predicted to be exported by the Tat system. The position of the signal peptide cleavage has not been experimentally proven.

Its subcellular location is the periplasm. The enzyme catalyses 2 Fe(II)-[cytochrome] + nitrate + 2 H(+) = 2 Fe(III)-[cytochrome] + nitrite + H2O. Functionally, catalytic subunit of the periplasmic nitrate reductase complex NapAB. Receives electrons from NapB and catalyzes the reduction of nitrate to nitrite. The polypeptide is Periplasmic nitrate reductase (Yersinia enterocolitica serotype O:8 / biotype 1B (strain NCTC 13174 / 8081)).